We begin with the raw amino-acid sequence, 153 residues long: uncharacterized protein (153 aa).

2 disordered regions span residues 30–66 (GPTV…RKGD) and 79–153 (IKEN…DYDD). A compositionally biased stretch (acidic residues) spans 45 to 56 (EDSDGSDKEDEQ). 2 stretches are compositionally biased toward polar residues: residues 106 to 116 (GDTTSGVNACS) and 130 to 144 (GTKS…SSLL).

This is an uncharacterized protein from Xenopus laevis (African clawed frog).